A 2315-amino-acid chain; its full sequence is Receptor-type tyrosine-protein phosphatase zeta (2315 aa).

An N-terminal signal peptide occupies residues 1-24 (MRILKRFLACIQLLCVCRLDWANG). At 25-1636 (YYRQQRKLVE…LAEGLESEKK (1612 aa)) the chain is on the extracellular side. The region spanning 36 to 300 (IGWSYTGALN…KFSRQVFSSY (265 aa)) is the Alpha-carbonic anhydrase domain. 2 cysteine pairs are disulfide-bonded: Cys56-Cys240 and Cys133-Cys264. N-linked (GlcNAc...) asparagine glycosylation is found at Asn105, Asn134, Asn223, Asn232, Asn324, and Asn381. One can recognise a Fibronectin type-III domain in the interval 314-413 (EPENVQADPE…LIVDMPTDNP (100 aa)). Disordered stretches follow at residues 442–462 (IVNP…PQIS) and 477–507 (AKTN…SQPV). A compositionally biased stretch (polar residues) spans 496–507 (PNTSLNSTSQPV). N-linked (GlcNAc...) asparagine glycans are attached at residues Asn497, Asn501, and Asn552. Ser587 carries an O-linked (Xyl...) (chondroitin sulfate) serine glycan. Asn602 and Asn629 each carry an N-linked (GlcNAc...) asparagine glycan. The tract at residues 628–650 (RNASEDSTSSGSEESLKDPSMEG) is disordered. The residue at position 637 (Ser637) is a Phosphoserine; alternate. Ser637 is a glycosylation site (O-linked (Xyl...) (chondroitin sulfate) serine; alternate). The residue at position 639 (Ser639) is a Phosphoserine. Asn677 carries N-linked (GlcNAc...) asparagine glycosylation. Ser997 is a glycosylation site (O-linked (Xyl...) (chondroitin sulfate) serine). N-linked (GlcNAc...) asparagine glycosylation is found at Asn1017, Asn1050, Asn1082, and Asn1122. A compositionally biased stretch (polar residues) spans 1123–1138 (FSVQPTHTVSQASGDT). 4 disordered regions span residues 1123–1160 (FSVQ…SSEM), 1397–1523 (KATS…EEND), 1543–1572 (LTSD…SFAD), and 1584–1621 (AGDS…NSSH). Residues 1145–1159 (SANSEPASSDPASSE) are compositionally biased toward low complexity. Residues 1417–1432 (EDGDTDDDGDDDDDDR) show a composition bias toward acidic residues. Residues 1450–1465 (ESQEKVMNDSDTHENS) show a composition bias toward basic and acidic residues. N-linked (GlcNAc...) asparagine glycosylation is present at Asn1457. Polar residues-rich tracts occupy residues 1466-1479 (LMDQ…SLSE) and 1487-1513 (VTSV…GLSQ). O-linked (Xyl...) (chondroitin sulfate) serine glycosylation is found at Ser1549 and Ser1551. Composition is skewed to polar residues over residues 1554 to 1572 (GTSD…SFAD) and 1593 to 1606 (FPQS…SENS). Asn1562 is a glycosylation site (N-linked (GlcNAc...) asparagine). A glycan (N-linked (GlcNAc...) asparagine) is linked at Asn1618. A helical transmembrane segment spans residues 1637–1662 (AVIPLVIVSALTFICLVVLVGILIYW). The Cytoplasmic segment spans residues 1663–2315 (RKCFQTAHFY…NIAESLESLV (653 aa)). Phosphothreonine occurs at positions 1684 and 1687. 2 consecutive Tyrosine-protein phosphatase domains span residues 1717 to 1992 (FTEE…LVEA) and 2023 to 2282 (LEKQ…ILSL). Substrate contacts are provided by residues Asp1901, 1933-1939 (CSAGVGR), and Gln1977. Residue Cys1933 is the Phosphocysteine intermediate of the active site. Residue Ser2055 is modified to Phosphoserine.

The protein belongs to the protein-tyrosine phosphatase family. Receptor class 5 subfamily. As to quaternary structure, the carbonic-anhydrase like domain interacts with CNTN1 (contactin). Interacts with PTN. Interaction with PTN promotes formation of homooligomers; oligomerization impairs phosphatase activity. Interacts (via chondroitin sulfate chains) with MDK (via C-terminal); this interaction is inhibited by PTN; this interaction promotes neuronal migration. As to expression, specifically expressed in the central nervous system, where it is localized in the Purkinje cell layer of the cerebellum, the dentate gyrus, and the subependymal layer of the anterior horn of the lateral ventricle. Developmentally regulated in the brain.

It is found in the cell membrane. It localises to the secreted. The enzyme catalyses O-phospho-L-tyrosyl-[protein] + H2O = L-tyrosyl-[protein] + phosphate. Functionally, protein tyrosine phosphatase that negatively regulates oligodendrocyte precursor proliferation in the embryonic spinal cord. Required for normal differentiation of the precursor cells into mature, fully myelinating oligodendrocytes. May play a role in protecting oligondendrocytes against apoptosis. May play a role in the establishment of contextual memory, probably via the dephosphorylation of proteins that are part of important signaling cascades. The chain is Receptor-type tyrosine-protein phosphatase zeta (PTPRZ1) from Homo sapiens (Human).